The sequence spans 345 residues: Uroporphyrinogen decarboxylase (345 aa).

Residues 24–28 (RQAGR), aspartate 74, tyrosine 150, serine 205, and histidine 318 each bind substrate.

It belongs to the uroporphyrinogen decarboxylase family. As to quaternary structure, homodimer.

The protein resides in the cytoplasm. The enzyme catalyses uroporphyrinogen III + 4 H(+) = coproporphyrinogen III + 4 CO2. It functions in the pathway porphyrin-containing compound metabolism; protoporphyrin-IX biosynthesis; coproporphyrinogen-III from 5-aminolevulinate: step 4/4. In terms of biological role, catalyzes the decarboxylation of four acetate groups of uroporphyrinogen-III to yield coproporphyrinogen-III. The chain is Uroporphyrinogen decarboxylase from Dichelobacter nodosus (strain VCS1703A).